The chain runs to 373 residues: Peptide chain release factor 1-like, mitochondrial (373 aa).

Residues 1–25 (MRSGFLSGARRLWARRAFSRTPPPS) constitute a mitochondrion transit peptide. The stretch at 56–110 (QLAAAARLLSEKERELRDTESLLHDENEDLKKLAESEIALCQKQITELKHQIISL) forms a coiled coil. Positions 229–293 (PKDLRIDTKR…LRARLYSMHL (65 aa)) are GGQ domain. A GGQ motif is present at residues 243 to 245 (GGQ). The residue at position 245 (Gln-245) is an N5-methylglutamine.

This sequence belongs to the prokaryotic/mitochondrial release factor family. In terms of processing, methylation of glutamine in the GGQ triplet by HEMK1 is conserved from bacteria to mammals.

Its subcellular location is the mitochondrion. Functionally, mitochondrial peptide chain release factor that directs the termination of translation in response to the peptide chain termination codons UAA and UAG. In Mus musculus (Mouse), this protein is Peptide chain release factor 1-like, mitochondrial (Mtrf1l).